We begin with the raw amino-acid sequence, 122 residues long: Phospholipase A2 crotoxin basic subunit CBb (122 aa).

Disulfide bonds link Cys26–Cys115, Cys28–Cys44, Cys43–Cys95, Cys49–Cys122, Cys50–Cys88, Cys57–Cys81, and Cys75–Cys86. Tyr27, Gly29, and Gly31 together coordinate Ca(2+). The active site involves His47. Asp48 provides a ligand contact to Ca(2+). The active site involves Asp89.

Belongs to the phospholipase A2 family. Group II subfamily. D49 sub-subfamily. Heterodimer of one of the acidic (CA1, CA2, CA3 or CA4) and one of the basic (CBa1, CBa2, CBb, CBc or CBd) subunits; non-covalently linked. The acidic subunit is non-toxic, without enzymatic activity and comprises 3 peptides that are cross-linked by 5 disulfide bridges. The basic subunit is toxic, has phospholipase A2 activity and is composed of a single chain. Multiple variants of each subunit give different crotoxin complexes that can be subdivided into 2 classes: (1) those of high toxicity, low PLA2 activity (CBb, CBc and CBd linked with high affinity to any CA) and high stability (K(d)=4.5 nM) and (2) those of moderate toxicity, high PLA2 activity (CBa2 linked with low affinity to any CA) and low stability (K(d)=25 nM). Ca(2+) is required as a cofactor. In terms of tissue distribution, expressed by the venom gland.

The protein localises to the secreted. The catalysed reaction is a 1,2-diacyl-sn-glycero-3-phosphocholine + H2O = a 1-acyl-sn-glycero-3-phosphocholine + a fatty acid + H(+). Heterodimer CA-CB: Crotoxin is a potent presynaptic neurotoxin that possesses phospholipase A2 (PLA2) activity and exerts a lethal action by blocking neuromuscular transmission. It consists of a non-covalent association of a basic and weakly toxic PLA2 subunit (CBa2, CBb, CBc, or CBd), with a small acidic, non-enzymatic and non-toxic subunit (CA1, CA2, CA3 or CA4). The complex acts by binding to a specific 48-kDa protein (R48) receptor located on presynaptic membranes, forming a transient ternary complex CA-CB-R48, followed by dissociation of the CA-CB complex and release of the CA subunit. At equilibrium, only the CB subunits remain associated with the specific crotoxin receptor. In addition to neurotoxicity, crotoxin has been found to exert myotoxicity, nephrotoxicity, and cardiovascular toxicity. Moreover, anti-inflammatory, immunomodulatory, anti-tumor and analgesic effects of crotoxin have also been reported. In terms of biological role, monomer CBb: The basic subunit of crotoxin is a snake venom phospholipase A2 (PLA2) that exhibits weak neurotoxicity (10-fold less than the heterodimer) and strong anticoagulant effects by binding to factor Xa (F10) and inhibiting the prothrombinase activity. In addition, it shows the same effects described for the heterodimer and binds the nucleotide-binding domain (NBD1) of CFTR chloride channels and increases the channel current. PLA2 catalyzes the calcium-dependent hydrolysis of the 2-acyl groups in 3-sn-phosphoglycerides. The polypeptide is Phospholipase A2 crotoxin basic subunit CBb (Crotalus durissus terrificus (South American rattlesnake)).